The following is a 403-amino-acid chain: F-box protein At2g40925 (403 aa).

The F-box domain occupies 21-71 (NRHDCEIPPDLMIEILIRLPTKSFMRFKCVSKQWSPLISGRYFCNRLFTCV).

In Arabidopsis thaliana (Mouse-ear cress), this protein is F-box protein At2g40925.